A 297-amino-acid polypeptide reads, in one-letter code: Aspartate carbamoyltransferase catalytic subunit (297 aa).

2 residues coordinate carbamoyl phosphate: Arg52 and Thr53. L-aspartate is bound at residue Lys80. Carbamoyl phosphate is bound by residues Arg102, His130, and Gln133. Arg167 and Arg217 together coordinate L-aspartate. The carbamoyl phosphate site is built by Gly256 and Pro257.

Belongs to the aspartate/ornithine carbamoyltransferase superfamily. ATCase family. As to quaternary structure, heterododecamer (2C3:3R2) of six catalytic PyrB chains organized as two trimers (C3), and six regulatory PyrI chains organized as three dimers (R2).

It catalyses the reaction carbamoyl phosphate + L-aspartate = N-carbamoyl-L-aspartate + phosphate + H(+). It participates in pyrimidine metabolism; UMP biosynthesis via de novo pathway; (S)-dihydroorotate from bicarbonate: step 2/3. In terms of biological role, catalyzes the condensation of carbamoyl phosphate and aspartate to form carbamoyl aspartate and inorganic phosphate, the committed step in the de novo pyrimidine nucleotide biosynthesis pathway. This chain is Aspartate carbamoyltransferase catalytic subunit, found in Helicobacter hepaticus (strain ATCC 51449 / 3B1).